Reading from the N-terminus, the 396-residue chain is Elongation factor Tu (396 aa).

The tr-type G domain maps to 10-206 (KLHVNVGTIG…ALDTHIPNPE (197 aa)). The segment at 19-26 (GHVDHGKT) is G1. Residue 19 to 26 (GHVDHGKT) coordinates GTP. Thr26 serves as a coordination point for Mg(2+). The G2 stretch occupies residues 60–64 (GITIS). The tract at residues 81–84 (DCPG) is G3. GTP contacts are provided by residues 81 to 85 (DCPGH) and 136 to 139 (NKAD). The interval 136–139 (NKAD) is G4. The segment at 174 to 176 (SAL) is G5.

The protein belongs to the TRAFAC class translation factor GTPase superfamily. Classic translation factor GTPase family. EF-Tu/EF-1A subfamily. Monomer.

The protein localises to the cytoplasm. The enzyme catalyses GTP + H2O = GDP + phosphate + H(+). GTP hydrolase that promotes the GTP-dependent binding of aminoacyl-tRNA to the A-site of ribosomes during protein biosynthesis. This Xylella fastidiosa (strain Temecula1 / ATCC 700964) protein is Elongation factor Tu.